A 248-amino-acid chain; its full sequence is 14-3-3-like protein 2 (248 aa).

It belongs to the 14-3-3 family. As to quaternary structure, interacts with daf-16. Interacts with sir-2.1. Interacts with hcf-1.

Its subcellular location is the cytoplasm. It localises to the nucleus. Its function is as follows. Required for extension of lifespan by sir-2.1. Required to modulate lifespan, in concert with hcf-1, acting redundantly with 14-3-3-like protein par-5. Promotes nuclear export of yap-1. Negatively regulates the transcriptional activity of daf-16 by sequestering it to the cytoplasm. The sequence is that of 14-3-3-like protein 2 from Caenorhabditis elegans.